Consider the following 287-residue polypeptide: ATP synthase gamma chain (287 aa).

The protein belongs to the ATPase gamma chain family. In terms of assembly, F-type ATPases have 2 components, CF(1) - the catalytic core - and CF(0) - the membrane proton channel. CF(1) has five subunits: alpha(3), beta(3), gamma(1), delta(1), epsilon(1). CF(0) has three main subunits: a, b and c.

It localises to the cell inner membrane. Functionally, produces ATP from ADP in the presence of a proton gradient across the membrane. The gamma chain is believed to be important in regulating ATPase activity and the flow of protons through the CF(0) complex. This Photorhabdus laumondii subsp. laumondii (strain DSM 15139 / CIP 105565 / TT01) (Photorhabdus luminescens subsp. laumondii) protein is ATP synthase gamma chain.